We begin with the raw amino-acid sequence, 341 residues long: Glycerol-3-phosphate dehydrogenase [NAD(P)+] (341 aa).

4 residues coordinate NADPH: serine 15, tryptophan 16, arginine 36, and lysine 110. 3 residues coordinate sn-glycerol 3-phosphate: lysine 110, glycine 139, and serine 141. Alanine 143 serves as a coordination point for NADPH. Residues lysine 194, aspartate 247, serine 257, arginine 258, and asparagine 259 each coordinate sn-glycerol 3-phosphate. The active-site Proton acceptor is lysine 194. Position 258 (arginine 258) interacts with NADPH. NADPH-binding residues include valine 282 and glutamate 284.

The protein belongs to the NAD-dependent glycerol-3-phosphate dehydrogenase family.

Its subcellular location is the cytoplasm. It carries out the reaction sn-glycerol 3-phosphate + NAD(+) = dihydroxyacetone phosphate + NADH + H(+). The enzyme catalyses sn-glycerol 3-phosphate + NADP(+) = dihydroxyacetone phosphate + NADPH + H(+). It functions in the pathway membrane lipid metabolism; glycerophospholipid metabolism. Functionally, catalyzes the reduction of the glycolytic intermediate dihydroxyacetone phosphate (DHAP) to sn-glycerol 3-phosphate (G3P), the key precursor for phospholipid synthesis. In Xanthomonas euvesicatoria pv. vesicatoria (strain 85-10) (Xanthomonas campestris pv. vesicatoria), this protein is Glycerol-3-phosphate dehydrogenase [NAD(P)+].